The primary structure comprises 1465 residues: MEQSSGRVNPEQPNNVLASLVGSIVEKGISENKPPSKPLPPRPSLLSFPVARHRSHGPHLAPVGSSIAQPKDYNDDQEEEEAEERFMNADSIAAFAKPLQRKEKKDMDLGRWKDMVSGDDPASTHVPQQSRKLKIIETRPPYVASADAATTSSNTLLAARASDQREFVSDKAPFIKNLGTKERVPLNASPPLAVSNGLGTRHASSSLESDIDVENHAKLQTMSPDEIAEAQAELLDKMDPALLSILKKRGEAKLKKRKHSVQGVSITDETAKNSRTEGHFVTPKVMAIPKEKSVVQKPGIAQGFVWDAWTERVEAARDLRFSFDGNVVEEDVVSPAETGGKWSGVESAAERDFLRTEGDPGAAGYTIKEAIALARSVIPGQRCLALHLLASVLDKALNKLCQSRIGYAREEKDKSTDWEAIWAYALGPEPELVLALRMALDDNHASVVIACVKVIQCLLSCSLNENFFNILENMGPHGKDIFTASVFRSKPEIDLGFLRGCYWKYSAKPSNIVAFREEILDDGTEDTDTIQKDVFVAGQDVAAGLVRMDILPRIYHLLETEPTAALEDSIISVTIAIARHSPKCTTAILKYPKFVQTIVKRFQLNKRMDVLSSQINSVRLLKVLARYDQSTCMEFVKNGTFNAVTWHLFQFTSSLDSWVKLGKQNCKLSSTLMVEQLRFWKVCIHSGCCVSRFPELFPALCLWLSCPSFEKLREKNLISEFTSVSNEAYLVLEAFAETLPNMYSQNIPRNESGTWDWSYVSPMIDSALSWITLAPQLLKWEKGIESVSVSTTTLLWLYSGVMRTISKVLEKISAEGEEEPLPWLPEFVPKIGLAIIKHKLLSFSVADVSRFGKDSSRCSSFMEYLCFLRERSQDDELALASVNCLHGLTRTIVSIQNLIESARSKMKAPHQVSISTGDESVLANGILAESLAELTSVSCSFRDSVSSEWPIVQSIELHKRGGLAPGVGLGWGASGGGFWSTRVLLAQAGAGLLSLFLNISLSDSQNDQGSVGFMDKVNSALAMCLIAGPRDYLLVERAFEYVLRPHALEHLACCIKSNKKNISFEWECSEGDYHRMSSMLASHFRHRWLQQKGRSIAEEGVSGVRKGTVGLETIHEDGEMSNSSTQDKKSDSSTIEWAHQRMPLPPHWFLSAISAVHSGKTSTGPPESTELLEVAKAGVFFLAGLESSSGFGSLPSPVVSVPLVWKFHALSTVLLVGMDIIEDKNTRNLYNYLQELYGQFLDEARLNHRDTELLRFKSDIHENYSTFLEMVVEQYAAVSYGDVVYGRQVSVYLHQCVEHSVRLSAWTVLSNARVLELLPSLDKCLGEADGYLEPVEENEAVLEAYLKSWTCGALDRAATRGSVAYTLVVHHFSSLVFCNQAKDKVSLRNKIVKTLVRDLSRKRHREGMMLDLLRYKKGSANAMEEEVIAAETEKRMEVLKEGCEGNSTLLLELEKLKSAALCGRR.

3 disordered regions span residues 27–85, 186–211, and 1113–1135; these read KGIS…AEER, LNAS…ESDI, and TIHE…SSTI.

Belongs to the RPAP1 family. In terms of assembly, interacts with HAG3, NRPB3 and NRPB10L. Expressed in root and shoot apices and in leaf and flower primordia. Detected in the endosperm, embryo, meristems and in organ primordia, but not in mature cells. Found exclusively in the vascular bundles in mature leaves.

Its subcellular location is the cytoplasm. It localises to the nucleus. Positive regulator of transcriptional elongation that is essential for cells to initiate differentiation. Interacts with RNA polymerase II and the Elongator complex and is required to sustain global levels of transcriptional elongation activity, specifically in differentiating tissues. This chain is Transcriptional elongation regulator MINIYO, found in Arabidopsis thaliana (Mouse-ear cress).